Here is a 433-residue protein sequence, read N- to C-terminus: Putative zinc metalloprotease BB_0118 (433 aa).

Position 17 (histidine 17) interacts with Zn(2+). The active site involves glutamate 18. A Zn(2+)-binding site is contributed by histidine 21. Residues 98–120 (ILIYFAGPLFNLIFSFIVFIFIS) form a helical membrane-spanning segment. In terms of domain architecture, PDZ spans 193 to 265 (TVSLQDFLKE…VVEIKFSRNG (73 aa)). 3 helical membrane passes run 334–356 (VSGP…LYWI), 366–388 (LAGM…FISF), and 401–423 (TIYS…GLFN).

Belongs to the peptidase M50B family. The cofactor is Zn(2+).

It localises to the cell inner membrane. This is Putative zinc metalloprotease BB_0118 from Borreliella burgdorferi (strain ATCC 35210 / DSM 4680 / CIP 102532 / B31) (Borrelia burgdorferi).